The sequence spans 435 residues: Glutamate-1-semialdehyde 2,1-aminomutase (435 aa).

Position 269 is an N6-(pyridoxal phosphate)lysine (K269).

It belongs to the class-III pyridoxal-phosphate-dependent aminotransferase family. HemL subfamily. In terms of assembly, homodimer. It depends on pyridoxal 5'-phosphate as a cofactor.

It localises to the cytoplasm. It carries out the reaction (S)-4-amino-5-oxopentanoate = 5-aminolevulinate. It participates in porphyrin-containing compound metabolism; protoporphyrin-IX biosynthesis; 5-aminolevulinate from L-glutamyl-tRNA(Glu): step 2/2. This Gemmatimonas aurantiaca (strain DSM 14586 / JCM 11422 / NBRC 100505 / T-27) protein is Glutamate-1-semialdehyde 2,1-aminomutase.